Reading from the N-terminus, the 472-residue chain is H(+)/Cl(-) exchange transporter ClcA (472 aa).

At 1 to 32 the chain is on the cytoplasmic side; that stretch reads MKAETPSFEAHQFVRVRRGDAVRRLIQRDKTP. Residues 33–69 form a helical membrane-spanning segment; the sequence is LAVLLMAAVVGTLAGLVGVAFEKSVNWVQNQRIGALA. Over 70–76 the chain is Periplasmic; the sequence is QVADHWY. The chain crosses the membrane as a helical span at residues 77 to 100; it reads LVWPLAFILSALLAMVGYFLVRRF. The Selectivity filter part_1 motif lies at 106–110; sequence GSGIP. Residue S107 participates in chloride binding. The segment at residues 109–116 is an intramembrane region (helical); it reads IPEIEGAL. Topologically, residues 117–123 are cytoplasmic; that stretch reads EELRPVR. 2 consecutive transmembrane segments (helical) span residues 124-141 and 148-166; these read WWRV…TLGA and EGPM…LDIF. The Selectivity filter part_2 motif lies at 146–150; that stretch reads GREGP. Residues 167–176 lie on the Cytoplasmic side of the membrane; it reads RMRSPEARHT. Intramembrane regions (helical) lie at residues 177–189 and 193–201; these read LLAT…LSAA and PLAGILFII. Residues 202–214 are Cytoplasmic-facing; the sequence is EEMRPQFRYNLIS. Residues 215-232 traverse the membrane as a helical segment; sequence IKAVFTGVIMSSIVFRIF. Residues 233–252 lie on the Periplasmic side of the membrane; sequence NGEAAIIEVGKLSNAPVNTL. A helical transmembrane segment spans residues 253–281; it reads WLYLVLGMLFGCFGPLFNFLVLRTQDIFQ. Residues 282–287 lie on the Cytoplasmic side of the membrane; sequence RIHGGN. A helical transmembrane segment spans residues 288–309; that stretch reads IKTWVLMGGVIGGICGLLGLMQ. Topologically, residues 310–329 are periplasmic; sequence PSAVGGGFNLIPIAAAGNFS. 2 consecutive transmembrane segments (helical) span residues 330 to 349 and 355 to 376; these read VGLL…ICFS and GIFA…MAAI. The Selectivity filter part_3 motif lies at 355 to 359; the sequence is GIFAP. I356 and F357 together coordinate chloride. The Periplasmic portion of the chain corresponds to 377–386; it reads PLFPAYHLDA. The segment at residues 387–401 is an intramembrane region (helical); sequence GTFAIAGMGALLAAS. An intramembrane region (note=Loop between two helices) is located at residues 402-404; it reads VRA. Positions 405–416 form an intramembrane region, helical; it reads PLTGIVLVLEMT. Residues 417–421 constitute an intramembrane region (note=Loop between two helices); that stretch reads DNYQL. Residues 422–438 form a helical membrane-spanning segment; the sequence is ILPMIITCLGATLLAQF. Topologically, residues 439–472 are cytoplasmic; the sequence is LGGKPLYSTILQRTLAKQEAEQAAKAQQAPRENT. Y445 provides a ligand contact to chloride.

This sequence belongs to the chloride channel (TC 2.A.49) family. ClcA subfamily. As to quaternary structure, homodimer.

It localises to the cell inner membrane. The enzyme catalyses 2 chloride(in) + H(+)(out) = 2 chloride(out) + H(+)(in). Its function is as follows. Proton-coupled chloride transporter. Functions as antiport system and exchanges two chloride ions for 1 proton. Probably acts as an electrical shunt for an outwardly-directed proton pump that is linked to amino acid decarboxylation, as part of the extreme acid resistance (XAR) response. The protein is H(+)/Cl(-) exchange transporter ClcA of Klebsiella pneumoniae (strain 342).